The chain runs to 248 residues: tRNA (guanine-N(1)-)-methyltransferase (248 aa).

Residues Gly-113 and 133–138 (IGDFVL) contribute to the S-adenosyl-L-methionine site.

Belongs to the RNA methyltransferase TrmD family. In terms of assembly, homodimer.

The protein resides in the cytoplasm. It carries out the reaction guanosine(37) in tRNA + S-adenosyl-L-methionine = N(1)-methylguanosine(37) in tRNA + S-adenosyl-L-homocysteine + H(+). In terms of biological role, specifically methylates guanosine-37 in various tRNAs. The polypeptide is tRNA (guanine-N(1)-)-methyltransferase (Dehalococcoides mccartyi (strain ATCC BAA-2266 / KCTC 15142 / 195) (Dehalococcoides ethenogenes (strain 195))).